A 374-amino-acid chain; its full sequence is Queuine tRNA-ribosyltransferase (374 aa).

Catalysis depends on D95, which acts as the Proton acceptor. Residues 95–99, D149, Q191, and G218 contribute to the substrate site; that span reads DSGGF. The segment at 249-255 is RNA binding; the sequence is GVGTYRE. D268 functions as the Nucleophile in the catalytic mechanism. Residues 273–277 are RNA binding; important for wobble base 34 recognition; that stretch reads TRWAR. 4 residues coordinate Zn(2+): C306, C308, C311, and H337.

Belongs to the queuine tRNA-ribosyltransferase family. In terms of assembly, homodimer. Within each dimer, one monomer is responsible for RNA recognition and catalysis, while the other monomer binds to the replacement base PreQ1. It depends on Zn(2+) as a cofactor.

The catalysed reaction is 7-aminomethyl-7-carbaguanine + guanosine(34) in tRNA = 7-aminomethyl-7-carbaguanosine(34) in tRNA + guanine. It functions in the pathway tRNA modification; tRNA-queuosine biosynthesis. Functionally, catalyzes the base-exchange of a guanine (G) residue with the queuine precursor 7-aminomethyl-7-deazaguanine (PreQ1) at position 34 (anticodon wobble position) in tRNAs with GU(N) anticodons (tRNA-Asp, -Asn, -His and -Tyr). Catalysis occurs through a double-displacement mechanism. The nucleophile active site attacks the C1' of nucleotide 34 to detach the guanine base from the RNA, forming a covalent enzyme-RNA intermediate. The proton acceptor active site deprotonates the incoming PreQ1, allowing a nucleophilic attack on the C1' of the ribose to form the product. After dissociation, two additional enzymatic reactions on the tRNA convert PreQ1 to queuine (Q), resulting in the hypermodified nucleoside queuosine (7-(((4,5-cis-dihydroxy-2-cyclopenten-1-yl)amino)methyl)-7-deazaguanosine). The chain is Queuine tRNA-ribosyltransferase from Nostoc sp. (strain PCC 7120 / SAG 25.82 / UTEX 2576).